Consider the following 127-residue polypeptide: Major sperm protein 19/31/40/45/50/51/53/59/61/65/81/113/142 (127 aa).

An N-acetylalanine modification is found at alanine 2. The MSP domain maps to 9 to 126; that stretch reads DIQTQPGTKI…RRKNLPIEYN (118 aa).

In terms of assembly, helical subfilaments are built from MSP dimers; filaments are formed from two subfilaments coiling round one another; and filaments themselves supercoil to produce bundles. In terms of tissue distribution, sperm.

It localises to the cell projection. The protein localises to the pseudopodium. It is found in the cytoplasm. Its subcellular location is the cytoskeleton. In terms of biological role, central component in molecular interactions underlying sperm crawling. Forms an extensive filament system that extends from sperm villipoda, along the leading edge of the pseudopod. This is Major sperm protein 19/31/40/45/50/51/53/59/61/65/81/113/142 (msp-19) from Caenorhabditis elegans.